The primary structure comprises 214 residues: Small ribosomal subunit protein eS6 (214 aa).

This sequence belongs to the eukaryotic ribosomal protein eS6 family.

This Saccharolobus islandicus (strain L.S.2.15 / Lassen #1) (Sulfolobus islandicus) protein is Small ribosomal subunit protein eS6.